The primary structure comprises 445 residues: Trigger factor (445 aa).

Residues 162–247 enclose the PPIase FKBP-type domain; that stretch reads GDQVTIDAIG…IKAVHTAEPT (86 aa).

The protein belongs to the FKBP-type PPIase family. Tig subfamily.

It is found in the cytoplasm. It catalyses the reaction [protein]-peptidylproline (omega=180) = [protein]-peptidylproline (omega=0). Involved in protein export. Acts as a chaperone by maintaining the newly synthesized protein in an open conformation. Functions as a peptidyl-prolyl cis-trans isomerase. The sequence is that of Trigger factor from Rickettsia rickettsii (strain Sheila Smith).